A 271-amino-acid polypeptide reads, in one-letter code: Shikimate dehydrogenase (NADP(+)) (271 aa).

Shikimate-binding positions include 15–17 (SKS) and Thr62. Residue Lys66 is the Proton acceptor of the active site. NADP(+) is bound at residue Glu78. The shikimate site is built by Asn87 and Asp103. NADP(+)-binding positions include 127–131 (GAGGA), 151–156 (NRTQAK), and Met214. A shikimate-binding site is contributed by Tyr216. Residue Gly238 participates in NADP(+) binding.

Belongs to the shikimate dehydrogenase family. As to quaternary structure, homodimer.

It carries out the reaction shikimate + NADP(+) = 3-dehydroshikimate + NADPH + H(+). It functions in the pathway metabolic intermediate biosynthesis; chorismate biosynthesis; chorismate from D-erythrose 4-phosphate and phosphoenolpyruvate: step 4/7. Its function is as follows. Involved in the biosynthesis of the chorismate, which leads to the biosynthesis of aromatic amino acids. Catalyzes the reversible NADPH linked reduction of 3-dehydroshikimate (DHSA) to yield shikimate (SA). This chain is Shikimate dehydrogenase (NADP(+)), found in Shewanella pealeana (strain ATCC 700345 / ANG-SQ1).